Consider the following 490-residue polypeptide: NAI2-like protein (490 aa).

Positions 1 to 24 are cleaved as a signal peptide; the sequence is MGRKYVVLGLAVCLFLSSFNEVSC. Disordered stretches follow at residues 43–83 and 155–206; these read EEGE…VDKF and AATN…FNKG. A coiled-coil region spans residues 136–163; it reads IADERRQRLEDIERKLKAAAATNIVVED. A compositionally biased stretch (basic and acidic residues) spans 171–183; the sequence is KVEETQEVVKFES. Low complexity predominate over residues 184-199; that stretch reads ESSSASSESRRQSSSS. The stretch at 433–465 forms a coiled coil; it reads TFEKTVANLSRVIEEASQAYEEYHVVVRKWKEE.

The chain is NAI2-like protein from Arabidopsis thaliana (Mouse-ear cress).